The chain runs to 135 residues: Protein E6 (135 aa).

2 zinc fingers span residues 11-47 (CVFC…CTAC) and 83-119 (CMYC…CYTC).

Belongs to the papillomaviridae E6 protein family. In terms of assembly, forms homodimers. Interacts with ubiquitin-protein ligase UBE3A/E6-AP; this interaction stimulates UBE3A ubiquitin activity. Interacts with host BAK1.

It localises to the host cytoplasm. It is found in the host nucleus. Its function is as follows. Plays a major role in the induction and maintenance of cellular transformation. E6 associates with host UBE3A/E6-AP ubiquitin-protein ligase and modulates its activity. Protects host keratinocytes from apoptosis by mediating the degradation of host BAK1. May also inhibit host immune response. This is Protein E6 from Odocoileus virginianus papillomavirus 1 (DPV).